The chain runs to 70 residues: Protein SlyX homolog (70 aa).

The protein belongs to the SlyX family.

The protein is Protein SlyX homolog of Shewanella sp. (strain MR-4).